The primary structure comprises 289 residues: Probable acetolactate synthase small subunit (289 aa).

At serine 34 the chain carries Phosphoserine. The region spanning 72 to 149 is the ACT domain; that stretch reads VFNCLVQNEP…AVLDYTGTSM (78 aa).

Belongs to the acetolactate synthase small subunit family.

It is found in the cytoplasm. It participates in amino-acid biosynthesis; L-isoleucine biosynthesis; L-isoleucine from 2-oxobutanoate: step 1/4. Its pathway is amino-acid biosynthesis; L-valine biosynthesis; L-valine from pyruvate: step 1/4. In terms of biological role, stimulates activity of the acetolactate synthase catalytic subunit ilv1. This Schizosaccharomyces pombe (strain 972 / ATCC 24843) (Fission yeast) protein is Probable acetolactate synthase small subunit.